An 885-amino-acid chain; its full sequence is Dipeptidyl peptidase 9 (885 aa).

Active-site charge relay system residues include Ser752, Asp830, and His862. Ser752 contacts Val-boroPro.

The protein belongs to the peptidase S9B family. DPPIV subfamily. As to quaternary structure, homodimer. Forms a ternary complex with NLRP1, composed of a DPP9 homodimer, one full-length NLRP1 protein, and one cleaved C-terminus of NLRP1 (NACHT, LRR and PYD domains-containing protein 1, C-terminus).

Its subcellular location is the nucleus. The catalysed reaction is Release of an N-terminal dipeptide, Xaa-Yaa-|-Zaa-, from a polypeptide, preferentially when Yaa is Pro, provided Zaa is neither Pro nor hydroxyproline.. Functionally, dipeptidyl peptidase that cleaves off N-terminal dipeptides from proteins having a Pro or Ala residue at position 2. Acts as a key inhibitor of the NLRP1 inflammasome. In Danio rerio (Zebrafish), this protein is Dipeptidyl peptidase 9.